A 1025-amino-acid polypeptide reads, in one-letter code: Multidrug resistance protein MdtC (1025 aa).

Transmembrane regions (helical) follow at residues 15–35, 333–353, 360–380, 387–407, 431–451, 469–489, 528–548, 851–871, 875–895, 897–917, 953–973, and 984–1004; these read ILIS…LPVA, EVEQ…FLFL, LIPA…MYLC, LSLM…IVVL, VGFT…PLLL, VAIG…CGWL, LTGL…ISIP, AQVI…GVLY, VHPL…LLAL, IFDA…IGIV, PIMM…LSGG, and ITIV…TPVV.

The protein belongs to the resistance-nodulation-cell division (RND) (TC 2.A.6) family. MdtC subfamily. As to quaternary structure, part of a tripartite efflux system composed of MdtA, MdtB and MdtC. MdtC forms a heteromultimer with MdtB.

Its subcellular location is the cell inner membrane. The sequence is that of Multidrug resistance protein MdtC from Klebsiella pneumoniae subsp. pneumoniae (strain ATCC 700721 / MGH 78578).